A 314-amino-acid polypeptide reads, in one-letter code: N-acyl-aromatic-L-amino acid amidohydrolase (carboxylate-forming) B (314 aa).

Residues His19 and Glu22 each contribute to the Zn(2+) site. Residues Arg63 and 70-71 (NR) contribute to the substrate site. Position 116 (His116) interacts with Zn(2+). 2 residues coordinate substrate: Glu178 and Tyr289.

This sequence belongs to the AspA/AstE family. Aspartoacylase subfamily. In terms of assembly, homotetramer. Zn(2+) is required as a cofactor.

Its subcellular location is the apical cell membrane. It localises to the cytoplasm. The enzyme catalyses an N-acyl-aromatic L-alpha-amino acid + H2O = an aromatic L-alpha-amino acid + a carboxylate. It carries out the reaction an N-acetyl-L-cysteine-S-conjugate + H2O = an S-substituted L-cysteine + acetate. In terms of biological role, plays an important role in deacetylating mercapturic acids in kidney proximal tubules. The chain is N-acyl-aromatic-L-amino acid amidohydrolase (carboxylate-forming) B (acy3.2) from Danio rerio (Zebrafish).